The sequence spans 147 residues: Hemoglobin subunit beta (147 aa).

An N-acetylvaline modification is found at Val-2. In terms of domain architecture, Globin spans 3–147; sequence HLTGEEKAAV…VANALAHKYH (145 aa). Thr-13 carries the post-translational modification Phosphothreonine. A Phosphoserine modification is found at Ser-45. At Lys-60 the chain carries N6-acetyllysine. His-64 is a binding site for heme b. Lys-83 is modified (N6-acetyllysine). Position 93 (His-93) interacts with heme b. The residue at position 94 (Cys-94) is an S-nitrosocysteine. The residue at position 145 (Lys-145) is an N6-acetyllysine.

The protein belongs to the globin family. As to quaternary structure, heterotetramer of two alpha chains and two beta chains. In terms of tissue distribution, red blood cells.

Functionally, involved in oxygen transport from the lung to the various peripheral tissues. The chain is Hemoglobin subunit beta (HBB) from Lagothrix lagotricha (Brown woolly monkey).